A 292-amino-acid polypeptide reads, in one-letter code: Alpha-soluble NSF attachment protein (292 aa).

The protein belongs to the SNAP family.

It is found in the cytoplasmic vesicle. Its subcellular location is the membrane. In terms of biological role, required for vesicular transport between the endoplasmic reticulum and the Golgi apparatus. Also between the endosome and phagosome. The polypeptide is Alpha-soluble NSF attachment protein (Drosophila melanogaster (Fruit fly)).